We begin with the raw amino-acid sequence, 1203 residues long: DNA-directed RNA polymerase subunit beta (1203 aa).

A disordered region spans residues Leu-1167–Asp-1203. Residues Ala-1190–Asp-1203 show a composition bias toward polar residues.

The protein belongs to the RNA polymerase beta chain family. In terms of assembly, the RNAP catalytic core consists of 2 alpha, 1 beta, 1 beta' and 1 omega subunit. When a sigma factor is associated with the core the holoenzyme is formed, which can initiate transcription.

The enzyme catalyses RNA(n) + a ribonucleoside 5'-triphosphate = RNA(n+1) + diphosphate. In terms of biological role, DNA-dependent RNA polymerase catalyzes the transcription of DNA into RNA using the four ribonucleoside triphosphates as substrates. The sequence is that of DNA-directed RNA polymerase subunit beta from Levilactobacillus brevis (strain ATCC 367 / BCRC 12310 / CIP 105137 / JCM 1170 / LMG 11437 / NCIMB 947 / NCTC 947) (Lactobacillus brevis).